We begin with the raw amino-acid sequence, 263 residues long: Purine nucleoside phosphorylase SAS1121 (263 aa).

Zn(2+)-binding residues include His79, Cys124, and His141.

It belongs to the purine nucleoside phosphorylase YfiH/LACC1 family. Homodimer. Cu(2+) serves as cofactor. It depends on Zn(2+) as a cofactor.

It carries out the reaction adenosine + phosphate = alpha-D-ribose 1-phosphate + adenine. The catalysed reaction is S-methyl-5'-thioadenosine + phosphate = 5-(methylsulfanyl)-alpha-D-ribose 1-phosphate + adenine. The enzyme catalyses inosine + phosphate = alpha-D-ribose 1-phosphate + hypoxanthine. It catalyses the reaction adenosine + H2O + H(+) = inosine + NH4(+). Purine nucleoside enzyme that catalyzes the phosphorolysis of adenosine and inosine nucleosides, yielding D-ribose 1-phosphate and the respective free bases, adenine and hypoxanthine. Also catalyzes the phosphorolysis of S-methyl-5'-thioadenosine into adenine and S-methyl-5-thio-alpha-D-ribose 1-phosphate. Also has adenosine deaminase activity. The sequence is that of Purine nucleoside phosphorylase SAS1121 from Staphylococcus aureus (strain MSSA476).